Here is a 271-residue protein sequence, read N- to C-terminus: Acyl-[acyl-carrier-protein]--UDP-N-acetylglucosamine O-acyltransferase (271 aa).

This sequence belongs to the transferase hexapeptide repeat family. LpxA subfamily. Homotrimer.

Its subcellular location is the cytoplasm. It catalyses the reaction a (3R)-hydroxyacyl-[ACP] + UDP-N-acetyl-alpha-D-glucosamine = a UDP-3-O-[(3R)-3-hydroxyacyl]-N-acetyl-alpha-D-glucosamine + holo-[ACP]. It participates in glycolipid biosynthesis; lipid IV(A) biosynthesis; lipid IV(A) from (3R)-3-hydroxytetradecanoyl-[acyl-carrier-protein] and UDP-N-acetyl-alpha-D-glucosamine: step 1/6. Its function is as follows. Involved in the biosynthesis of lipid A, a phosphorylated glycolipid that anchors the lipopolysaccharide to the outer membrane of the cell. In Sulfurihydrogenibium sp. (strain YO3AOP1), this protein is Acyl-[acyl-carrier-protein]--UDP-N-acetylglucosamine O-acyltransferase.